The following is a 701-amino-acid chain: MAVTVLPSVSGLSAVASSSNLRRLTSASNHRLTAIKSVTSTSSPPTPSSGVQRRRKNNDENRATVAKVVENPYSKVEAARPDLQKRLSDFLEEAREFVGDGGGPPRWFSPLECGAQATNSPLLLYLPGIDGTGLGLIRHHKKLGEIFDIWCLHIPVSDRTPVKDLVKLIEETVKSENFRLPNRPIYLVGESIGACLALDVAARNPNIDLSLILVNPATHVNNFMVQPLSGMLNVLPDGLPTLLEDIFDFGFKQGDPLTGMLDALSNEFSVQRMGGVGGGMLRDVLAVSANLPTLSRMFPKDTLLWKLEMLKYAIASVNSHIYSVRAETLILLSGRDHWLLKEEDIDRYSRTLPKCIVRKLDDNGQFPLLEDGVDLATIIKCTCFYRRGKSHDHITDYIMPTTFELKQQVDDHRLLMDGTSPVMLSTLEDGTVVRSLEGLPSEGPVLYVGYHMILGFELAPMVIQLMTERNIHLRGLAHPMLFKNLQDSLVDTKMFDKYKIMGGVPVSHFNIYKLLREKAHVLLYPGGVREALHRKGEEYKLFWPERSEFVRVASKFGAKIVPFGVVGEDDICEIVLDSNDQRNIPILKDLMEKATKDAGNIREGDESELGNQECYFPGLVPKIPGRFYYYFGKPIETAGKEKELKDKEKAQELYLQVKSEVEQCIDYLKVKRESDPYRHLLPRMLYQASHGWSSEIPTFDL.

The transit peptide at 1–65 (MAVTVLPSVS…KNNDENRATV (65 aa)) directs the protein to the chloroplast. The segment at 37-64 (SVTSTSSPPTPSSGVQRRRKNNDENRAT) is disordered.

This sequence belongs to the diacylglycerol acyltransferase family.

It is found in the plastid. It localises to the chloroplast. The protein localises to the plastoglobule. It carries out the reaction a 1,2-diacyl-3-O-(beta-D-galactosyl)-sn-glycerol + a 1,2-diacylglycerol = an acyl-3-O-(beta-D-galactosyl)-sn-glycerol + a triacylglycerol. The enzyme catalyses a 1,2-diacylglycerol + a fatty acyl-CoA = a triacylglycerol + CoA. It catalyses the reaction a fatty acyl-[ACP] + a 1,2-diacylglycerol = a triacylglycerol + holo-[ACP]. The catalysed reaction is phytol + a fatty acyl-CoA = a fatty acid phytyl ester + CoA. It carries out the reaction phytol + tetradecanoyl-CoA = tetradecanoate phytyl ester + CoA. The enzyme catalyses a 1,3-diacylglycerol + a fatty acyl-CoA = a triacylglycerol + CoA. It catalyses the reaction 1,2-dihexanoylglycerol + tetradecanoyl-CoA = 1,2-dihexanoyl-3-tetradecanoylglycerol + CoA. The catalysed reaction is 1,2-dihexanoylglycerol + hexadecanoyl-CoA = 1,2-dihexanoyl-3-hexadecanoylglycerol + CoA. It carries out the reaction 1,2-dihexanoylglycerol + octadecanoyl-CoA = 1,2-dihexanoyl-3-octadecanoylglycerol + CoA. The enzyme catalyses (7Z,10Z,13Z)-hexadecatrienoyl-CoA + 1,2-dihexanoylglycerol = 1,2-dihexanoyl-3-(7Z,10Z,13Z-hexadecatrienoyl)-glycerol + CoA. It catalyses the reaction 1,2-dihexanoylglycerol + (9Z)-octadecenoyl-CoA = 1,2-dihexanoyl-3-(9Z-octadecenoyl)-glycerol + CoA. The catalysed reaction is 1,2-dihexanoylglycerol + (9Z,12Z,15Z)-octadecatrienoyl-CoA = 1,2-dihexanoyl-3-(9Z,12Z,15Z-octadecatrienoyl)-glycerol + CoA. It carries out the reaction phytol + decanoyl-CoA = decanoate phytyl ester + CoA. The enzyme catalyses (7Z,10Z,13Z)-hexadecatrienoyl-CoA + phytol = (7Z,10Z,13Z)-hexadecatrienoate phytyl ester + CoA. It catalyses the reaction phytol + dodecanoyl-CoA = dodecanoate phytyl ester + CoA. Functionally, acyltransferase involved in fatty acid phytyl ester synthesis in chloroplasts, a process required for the maintenance of the photosynthetic membrane integrity during abiotic stress and senescence. Exhibits phytyl ester synthesis and diacylglycerol acyltransferase activities with broad substrate specificities, and can employ acyl-CoAs, acyl carrier proteins, and galactolipids as acyl donors. This chain is Phytyl ester synthase 2, chloroplastic, found in Arabidopsis thaliana (Mouse-ear cress).